Here is a 358-residue protein sequence, read N- to C-terminus: F-box protein At4g35733 (358 aa).

Residues 4-51 form the F-box domain; sequence ATVWSDLPGELLDHIANGLFSKVELLRFRSICKTFRSAVDSDKNFLDH.

Part of a SCF (ASK-cullin-F-box) protein ligase complex.

The protein operates within protein modification; protein ubiquitination. Component of SCF(ASK-cullin-F-box) E3 ubiquitin ligase complexes, which may mediate the ubiquitination and subsequent proteasomal degradation of target proteins. This is F-box protein At4g35733 from Arabidopsis thaliana (Mouse-ear cress).